The chain runs to 194 residues: Gonadal protein gdl (194 aa).

It belongs to the gonadal family. In stage 6-14 egg chamber nurse cells and oocytes of adult females and spermatocyte cysts and bundles of maturing sperm of larval, pupal and adult males.

This is Gonadal protein gdl (gdl) from Drosophila melanogaster (Fruit fly).